We begin with the raw amino-acid sequence, 787 residues long: Mitochondrial intermediate peptidase (787 aa).

Residues Met1–Trp36 constitute a mitochondrion transit peptide. Residue His573 participates in Zn(2+) binding. Glu574 is an active-site residue. Zn(2+) contacts are provided by His577 and His580.

It belongs to the peptidase M3 family. Zn(2+) serves as cofactor.

The protein localises to the mitochondrion matrix. The catalysed reaction is Release of an N-terminal octapeptide as second stage of processing of some proteins imported into the mitochondrion.. In terms of biological role, cleaves proteins, imported into the mitochondrion, to their mature size. While most mitochondrial precursor proteins are processed to the mature form in one step by mitochondrial processing peptidase (MPP), the sequential cleavage by MIP of an octapeptide after initial processing by MPP is a required step for a subgroup of nuclear-encoded precursor proteins destined for the matrix or the inner membrane. The sequence is that of Mitochondrial intermediate peptidase (OCT1) from Vanderwaltozyma polyspora (strain ATCC 22028 / DSM 70294 / BCRC 21397 / CBS 2163 / NBRC 10782 / NRRL Y-8283 / UCD 57-17) (Kluyveromyces polysporus).